We begin with the raw amino-acid sequence, 402 residues long: CCA-adding enzyme (402 aa).

2 residues coordinate ATP: G32 and R35. CTP-binding residues include G32 and R35. Mg(2+)-binding residues include D45 and D47. ATP is bound by residues R116, D159, R162, R165, and R168. R116, D159, R162, R165, and R168 together coordinate CTP.

Belongs to the tRNA nucleotidyltransferase/poly(A) polymerase family. Bacterial CCA-adding enzyme type 3 subfamily. As to quaternary structure, homodimer. Mg(2+) is required as a cofactor.

It carries out the reaction a tRNA precursor + 2 CTP + ATP = a tRNA with a 3' CCA end + 3 diphosphate. The catalysed reaction is a tRNA with a 3' CCA end + 2 CTP + ATP = a tRNA with a 3' CCACCA end + 3 diphosphate. Catalyzes the addition and repair of the essential 3'-terminal CCA sequence in tRNAs without using a nucleic acid template. Adds these three nucleotides in the order of C, C, and A to the tRNA nucleotide-73, using CTP and ATP as substrates and producing inorganic pyrophosphate. tRNA 3'-terminal CCA addition is required both for tRNA processing and repair. Also involved in tRNA surveillance by mediating tandem CCA addition to generate a CCACCA at the 3' terminus of unstable tRNAs. While stable tRNAs receive only 3'-terminal CCA, unstable tRNAs are marked with CCACCA and rapidly degraded. In Streptococcus thermophilus (strain CNRZ 1066), this protein is CCA-adding enzyme.